A 638-amino-acid chain; its full sequence is 1-deoxy-D-xylulose-5-phosphate synthase (638 aa).

Thiamine diphosphate contacts are provided by residues H72 and 113–115; that span reads GHA. Position 144 (D144) interacts with Mg(2+). Thiamine diphosphate is bound by residues 145–146, N174, Y287, and E370; that span reads GA. N174 provides a ligand contact to Mg(2+).

Belongs to the transketolase family. DXPS subfamily. Homodimer. Requires Mg(2+) as cofactor. The cofactor is thiamine diphosphate.

It carries out the reaction D-glyceraldehyde 3-phosphate + pyruvate + H(+) = 1-deoxy-D-xylulose 5-phosphate + CO2. It participates in metabolic intermediate biosynthesis; 1-deoxy-D-xylulose 5-phosphate biosynthesis; 1-deoxy-D-xylulose 5-phosphate from D-glyceraldehyde 3-phosphate and pyruvate: step 1/1. In terms of biological role, catalyzes the acyloin condensation reaction between C atoms 2 and 3 of pyruvate and glyceraldehyde 3-phosphate to yield 1-deoxy-D-xylulose-5-phosphate (DXP). The protein is 1-deoxy-D-xylulose-5-phosphate synthase of Picosynechococcus sp. (strain ATCC 27264 / PCC 7002 / PR-6) (Agmenellum quadruplicatum).